Reading from the N-terminus, the 588-residue chain is Complement component C8 beta chain (588 aa).

Positions 1–30 are cleaved as a signal peptide; sequence MFRVAIPRSALNLHSCLLHVTLSLVLISKA. The propeptide occupies 31–46; that stretch reads AITTAGNEDSDVREAR. A TSP type-1 1 domain is found at 58–113; sequence DCVISDWSAWSRCDTCQKKRYRYAKLDQPSQFGGEPCHFHDMEDEACDVPDRYTCD. 7 disulfide bridges follow: cysteine 59-cysteine 94, cysteine 70-cysteine 104, cysteine 73-cysteine 112, cysteine 118-cysteine 129, cysteine 123-cysteine 142, cysteine 136-cysteine 151, and cysteine 158-cysteine 196. 2 C-linked (Man) tryptophan glycosylation sites follow: tryptophan 64 and tryptophan 67. Residues 115-152 form the LDL-receptor class A domain; sequence IPLCEGFLCTQTGRCIHRTLQCNGEDDCGDMSDEVGCK. The Ca(2+) site is built by leucine 134, asparagine 137, glutamate 139, aspartate 141, aspartate 147, and glutamate 148. The 347-residue stretch at 154–500 folds into the MACPF domain; that stretch reads VPKPCRQEAE…EYLAESSSCR (347 aa). Transmembrane regions (beta stranded) follow at residues 248–255, 258–265, 375–382, and 388–395; these read TIVSIGFA, GIAEFGFN, TQAGLKIG, and VYVSAGIE. 5 disulfides stabilise this stretch: cysteine 374/cysteine 399, cysteine 499/cysteine 547, cysteine 501/cysteine 517, cysteine 504/cysteine 519, and cysteine 521/cysteine 530. Residues 501–531 form the EGF-like domain; it reads CAPCHNNGVAVLRGTRCDCVCPTGYTGRGCE. Positions 542–588 constitute a TSP type-1 2 domain; sequence DGSWSCWGAWSSCSGRKMSRSRQCNNPVPSDGGLACRGLQQESTDCF. Tryptophan 548 and tryptophan 551 each carry a C-linked (Man) tryptophan glycan. An intrachain disulfide couples cysteine 554 to cysteine 587.

The protein belongs to the complement C6/C7/C8/C9 family. Heterotrimer of 3 chains: alpha (C8A), beta (C8B) and gamma (C8G); the alpha and gamma chains are disulfide bonded. Component of the membrane attack complex (MAC), composed of complement C5b, C6, C7, C8A, C8B, C8G and multiple copies of the pore-forming subunit C9.

It localises to the secreted. The protein resides in the target cell membrane. In terms of biological role, component of the membrane attack complex (MAC), a multiprotein complex activated by the complement cascade, which inserts into a target cell membrane and forms a pore, leading to target cell membrane rupture and cell lysis. The MAC is initiated by proteolytic cleavage of C5 into complement C5b in response to the classical, alternative, lectin and GZMK complement pathways. The complement pathways consist in a cascade of proteins that leads to phagocytosis and breakdown of pathogens and signaling that strengthens the adaptive immune system. C8B, together with C8A and C8G, inserts into the target membrane, but does not form pores by itself. During MAC assembly, associates with C5b, C6 and C7 to form the C5b8 intermediate complex that inserts into the target membrane and traverses the bilayer increasing membrane rigidity. This is Complement component C8 beta chain (c8b) from Paralichthys olivaceus (Bastard halibut).